Consider the following 225-residue polypeptide: Elongation factor 1-beta (225 aa).

The GST C-terminal domain occupies Gly-2–Val-84. At Lys-7 the chain carries N6-acetyllysine. Ser-8 and Ser-42 each carry phosphoserine. The tract at residues Lys-78–Ala-115 is disordered. Residues Thr-88 and Thr-93 each carry the phosphothreonine modification. Phosphoserine occurs at positions 95 and 106. The segment covering Lys-96 to Glu-113 has biased composition (acidic residues). Lys-147 is covalently cross-linked (Glycyl lysine isopeptide (Lys-Gly) (interchain with G-Cter in SUMO2)). The residue at position 174 (Ser-174) is a Phosphoserine.

This sequence belongs to the EF-1-beta/EF-1-delta family. In terms of assembly, EF-1 is composed of 4 subunits: alpha, beta (alpha subunit of the eEF1B subcomplex), delta (beta subunit of the eEF1B subcomplex), and gamma (gamma subunit of the eEF1B subcomplex). Interacts with elongation factor EEF1A1. Phosphorylation affects the GDP/GTP exchange rate.

Catalytic subunit of the guanine nucleotide exchange factor (GEF) (eEF1B subcomplex) of the eukaryotic elongation factor 1 complex (eEF1). Stimulates the exchange of GDP for GTP on elongation factor 1A (eEF1A), probably by displacing GDP from the nucleotide binding pocket in eEF1A. In Homo sapiens (Human), this protein is Elongation factor 1-beta (EEF1B2).